A 332-amino-acid polypeptide reads, in one-letter code: Fructose-1,6-bisphosphatase class 1 (332 aa).

Residues Glu93, Asp113, Leu115, and Asp116 each contribute to the Mg(2+) site. Substrate is bound by residues 116–119 (DGSS), Asn209, Tyr235, and Lys272. Glu278 contributes to the Mg(2+) binding site.

The protein belongs to the FBPase class 1 family. As to quaternary structure, homotetramer. Requires Mg(2+) as cofactor.

Its subcellular location is the cytoplasm. The catalysed reaction is beta-D-fructose 1,6-bisphosphate + H2O = beta-D-fructose 6-phosphate + phosphate. Its pathway is carbohydrate biosynthesis; gluconeogenesis. In Syntrophus aciditrophicus (strain SB), this protein is Fructose-1,6-bisphosphatase class 1.